Consider the following 66-residue polypeptide: Gallinacin-8 (66 aa).

Positions 1-19 (MKILYLLLAVLLTVLQSSL) are cleaved as a signal peptide. A propeptide spanning residues 20–25 (GFMRVP) is cleaved from the precursor. Cystine bridges form between cysteine 31–cysteine 60, cysteine 38–cysteine 54, and cysteine 43–cysteine 61.

This sequence belongs to the beta-defensin family. Expressed in the liver, kidney, gall bladder, testis, ovary and male and femae reproductive tracts. Expressed in the ovarian stroma and the theca and granulosa layers of the ovarian follicle.

Its subcellular location is the secreted. The protein resides in the cytoplasmic granule. In terms of biological role, has bactericidal activity. The protein is Gallinacin-8 (GAL8) of Gallus gallus (Chicken).